The primary structure comprises 347 residues: Fructose-1,6-bisphosphatase class 1 (347 aa).

Mg(2+) contacts are provided by glutamate 107, aspartate 128, leucine 130, and aspartate 131. Substrate contacts are provided by residues 131 to 134, asparagine 224, tyrosine 257, and lysine 286; that span reads DGSS. Glutamate 292 contacts Mg(2+).

It belongs to the FBPase class 1 family. Homotetramer. It depends on Mg(2+) as a cofactor.

It localises to the cytoplasm. It catalyses the reaction beta-D-fructose 1,6-bisphosphate + H2O = beta-D-fructose 6-phosphate + phosphate. The protein operates within carbohydrate biosynthesis; gluconeogenesis. The protein is Fructose-1,6-bisphosphatase class 1 of Sorangium cellulosum (strain So ce56) (Polyangium cellulosum (strain So ce56)).